The sequence spans 127 residues: Anti-adapter protein IraD (127 aa).

The protein belongs to the GpW/Gp25 family. IraD subfamily. Interacts with RssB.

The protein localises to the cytoplasm. Inhibits RpoS proteolysis by regulating RssB activity, thereby increasing the stability of the sigma stress factor RpoS during oxidative stress. Its effect on RpoS stability is due to its interaction with RssB, which probably blocks the interaction of RssB with RpoS, and the consequent delivery of the RssB-RpoS complex to the ClpXP protein degradation pathway. The protein is Anti-adapter protein IraD of Escherichia coli O6:H1 (strain CFT073 / ATCC 700928 / UPEC).